The primary structure comprises 72 residues: Translation initiation factor IF-1 (72 aa).

The S1-like domain occupies 1-72; that stretch reads MAKEDVIEVE…TRGRITYRFK (72 aa).

This sequence belongs to the IF-1 family. As to quaternary structure, component of the 30S ribosomal translation pre-initiation complex which assembles on the 30S ribosome in the order IF-2 and IF-3, IF-1 and N-formylmethionyl-tRNA(fMet); mRNA recruitment can occur at any time during PIC assembly.

The protein resides in the cytoplasm. In terms of biological role, one of the essential components for the initiation of protein synthesis. Stabilizes the binding of IF-2 and IF-3 on the 30S subunit to which N-formylmethionyl-tRNA(fMet) subsequently binds. Helps modulate mRNA selection, yielding the 30S pre-initiation complex (PIC). Upon addition of the 50S ribosomal subunit IF-1, IF-2 and IF-3 are released leaving the mature 70S translation initiation complex. The chain is Translation initiation factor IF-1 from Listeria innocua serovar 6a (strain ATCC BAA-680 / CLIP 11262).